Consider the following 119-residue polypeptide: Large ribosomal subunit protein bL20 (119 aa).

This sequence belongs to the bacterial ribosomal protein bL20 family.

Binds directly to 23S ribosomal RNA and is necessary for the in vitro assembly process of the 50S ribosomal subunit. It is not involved in the protein synthesizing functions of that subunit. The chain is Large ribosomal subunit protein bL20 from Treponema denticola (strain ATCC 35405 / DSM 14222 / CIP 103919 / JCM 8153 / KCTC 15104).